We begin with the raw amino-acid sequence, 336 residues long: Foldase protein PrsA (336 aa).

Positions 1-22 are cleaved as a signal peptide; that stretch reads MKSAKKLLSVLCLGIFILTFTA. C23 carries the N-palmitoyl cysteine lipid modification. The S-diacylglycerol cysteine moiety is linked to residue C23. Residues 194–286 form the PpiC domain; the sequence is PNTMNVSHIL…FGYHIIKINS (93 aa).

It belongs to the PrsA family.

The protein localises to the cell membrane. It catalyses the reaction [protein]-peptidylproline (omega=180) = [protein]-peptidylproline (omega=0). Its function is as follows. Plays a major role in protein secretion by helping the post-translocational extracellular folding of several secreted proteins. The protein is Foldase protein PrsA of Clostridium botulinum (strain Okra / Type B1).